A 156-amino-acid polypeptide reads, in one-letter code: Putative pre-16S rRNA nuclease (156 aa).

This sequence belongs to the YqgF nuclease family.

The protein resides in the cytoplasm. In terms of biological role, could be a nuclease involved in processing of the 5'-end of pre-16S rRNA. This is Putative pre-16S rRNA nuclease from Albidiferax ferrireducens (strain ATCC BAA-621 / DSM 15236 / T118) (Rhodoferax ferrireducens).